Consider the following 330-residue polypeptide: MSFFTKTAQLVSGAAVAATLFTATAQAETVLRGASMFDEEHAFTKTLRKFEELVDEKYDGDVTFDLRLNGELGVESDYVTFLNQGVAIDYTILAPSNMAKFAPSIPLMDMPFLFRDLDHWNAVLSSDVLAPLEDELLEKADIKIVGYTGGGTRNLLSKQPVVTFDDLKGHKMRVMGAPIQAQIFQALTAAPSAIAYNEVYNAIQTGVIAGFENEAASIQNLKFYEVAPNLTLTRHSITVRPIVMSGKTFNSLPADLQAVVLEAGEEAGAYGRELESREDGVKLQEMVDAGQLTVSEFENRDKMLEMVKPVQDAYAAEIGASDLLEAVRAK.

An N-terminal signal peptide occupies residues 1 to 27 (MSFFTKTAQLVSGAAVAATLFTATAQA). Alpha-D-mannuronate is bound by residues glutamate 75, asparagine 97, arginine 153, arginine 173, tyrosine 196, 213–214 (NE), and arginine 240. Residues glutamate 75, asparagine 97, arginine 153, arginine 173, tyrosine 196, 213–214 (NE), and arginine 240 each bind alpha-D-taluronate.

This sequence belongs to the bacterial solute-binding protein 7 family. As to quaternary structure, the complex is comprised of an extracytoplasmic solute-binding protein and a heteromeric permease formed by two transmembrane proteins.

It localises to the periplasm. Solute-binding protein that binds D-mannuronate and D-taluronate (in vitro). Probably part of a tripartite ATP-independent periplasmic (TRAP) transport system that mediates solute transport into the cytoplasm. The sequence is that of Solute-binding protein NAS141_03721 from Sulfitobacter sp. (strain NAS-14.1).